A 180-amino-acid chain; its full sequence is Protein PHLOEM PROTEIN 2-LIKE A9 (180 aa).

Positions 1 to 21 (MSSQKSSHHKADSKMEQDNNR) are disordered. The segment covering 9-21 (HKADSKMEQDNNR) has biased composition (basic and acidic residues).

The protein is Protein PHLOEM PROTEIN 2-LIKE A9 (PP2A9) of Arabidopsis thaliana (Mouse-ear cress).